Reading from the N-terminus, the 492-residue chain is Bifunctional shikimate kinase/3-dehydroquinate synthase (492 aa).

Residues 1-161 (MRIFLVGMMG…TALVVLEALD (161 aa)) form a shikimate kinase region. 10–15 (GSGKST) is a binding site for ATP. Residue Ser14 participates in Mg(2+) binding. Positions 32, 56, and 78 each coordinate substrate. Arg114 provides a ligand contact to ATP. A substrate-binding site is contributed by Arg131. The tract at residues 162–492 (EKEISTIEKP…DPLELLEVVD (331 aa)) is 3-dehydroquinate synthase.

In the N-terminal section; belongs to the shikimate kinase family. It in the C-terminal section; belongs to the sugar phosphate cyclases superfamily. Dehydroquinate synthase family. Mg(2+) serves as cofactor. Requires NAD(+) as cofactor. A divalent metal cation is required as a cofactor.

It localises to the cytoplasm. It carries out the reaction 7-phospho-2-dehydro-3-deoxy-D-arabino-heptonate = 3-dehydroquinate + phosphate. It catalyses the reaction shikimate + ATP = 3-phosphoshikimate + ADP + H(+). Its pathway is metabolic intermediate biosynthesis; chorismate biosynthesis; chorismate from D-erythrose 4-phosphate and phosphoenolpyruvate: step 2/7. It participates in metabolic intermediate biosynthesis; chorismate biosynthesis; chorismate from D-erythrose 4-phosphate and phosphoenolpyruvate: step 5/7. Functionally, catalyzes the specific phosphorylation of the 3-hydroxyl group of shikimic acid using ATP as a cosubstrate. The polypeptide is Bifunctional shikimate kinase/3-dehydroquinate synthase (aroKB) (Thermotoga maritima (strain ATCC 43589 / DSM 3109 / JCM 10099 / NBRC 100826 / MSB8)).